The following is a 219-amino-acid chain: DAN domain family member 5 (219 aa).

An N-terminal signal peptide occupies residues 1–19 (MLLFRAASLLPLLCFTVGA). Intrachain disulfides connect cysteine 118–cysteine 165, cysteine 132–cysteine 179, cysteine 142–cysteine 195, and cysteine 146–cysteine 197. The region spanning 118 to 198 (CHALPFIQNV…VELVEECECE (81 aa)) is the CTCK domain.

Belongs to the DAN family. In terms of assembly, interacts with nr1-a.

The protein localises to the secreted. Its function is as follows. Plays an important role in regulating the left-right axis by blocking a tgfb1 cascade in the right posterior paraxial mesoderm. Functions as an inhibitor of bmp, tgfb1, nodal, activin and wnt signaling in the ectoderm. May inhibit mesodermal signals, probably through an inhibition of nodal/activin pathways. Seems to regulates cell fate specification and competence before the onset of neural induction. Expression in the entire ectodermal region prior to gastrulation might act to prevent fate specification in the ectoderm and ensure the maintenance of the stem-cell-like properties exhibited by ectodermal cells. This chain is DAN domain family member 5 (dand5), found in Xenopus tropicalis (Western clawed frog).